The sequence spans 362 residues: HMG box-containing protein C19G7.04 (362 aa).

In terms of domain architecture, SprT-like spans 135–299 (KCFLARLEDE…RLCKSQIKQI (165 aa)). The segment at residues 306–348 (PNAFQIFLKENSKRLRKLHPHITHKELMKKLSDEYHRTKDAKQ) is a DNA-binding region (HMG box).

The protein localises to the nucleus. Its subcellular location is the cytoplasm. It is found in the cytoskeleton. It localises to the spindle. The polypeptide is HMG box-containing protein C19G7.04 (Schizosaccharomyces pombe (strain 972 / ATCC 24843) (Fission yeast)).